A 202-amino-acid polypeptide reads, in one-letter code: Imidazole glycerol phosphate synthase subunit HisH (202 aa).

The region spanning 3–202 (RIVILDYGLG…KILKNFVDMC (200 aa)) is the Glutamine amidotransferase type-1 domain. Residue C79 is the Nucleophile of the active site. Active-site residues include H183 and E185.

In terms of assembly, heterodimer of HisH and HisF.

It localises to the cytoplasm. The catalysed reaction is 5-[(5-phospho-1-deoxy-D-ribulos-1-ylimino)methylamino]-1-(5-phospho-beta-D-ribosyl)imidazole-4-carboxamide + L-glutamine = D-erythro-1-(imidazol-4-yl)glycerol 3-phosphate + 5-amino-1-(5-phospho-beta-D-ribosyl)imidazole-4-carboxamide + L-glutamate + H(+). It carries out the reaction L-glutamine + H2O = L-glutamate + NH4(+). It participates in amino-acid biosynthesis; L-histidine biosynthesis; L-histidine from 5-phospho-alpha-D-ribose 1-diphosphate: step 5/9. IGPS catalyzes the conversion of PRFAR and glutamine to IGP, AICAR and glutamate. The HisH subunit catalyzes the hydrolysis of glutamine to glutamate and ammonia as part of the synthesis of IGP and AICAR. The resulting ammonia molecule is channeled to the active site of HisF. This Methanosarcina barkeri (strain Fusaro / DSM 804) protein is Imidazole glycerol phosphate synthase subunit HisH.